The primary structure comprises 724 residues: Catalase-peroxidase (724 aa).

The segment at residues 98-226 (WHSAGSYRIA…LAAVMMGLIY (129 aa)) is a cross-link (tryptophyl-tyrosyl-methioninium (Trp-Tyr) (with M-252)). The active-site Proton acceptor is the histidine 99. Residues 226–252 (YVNPEGVDGHPDPQKTANDVRVTFARM) constitute a cross-link (tryptophyl-tyrosyl-methioninium (Tyr-Met) (with W-98)). Histidine 267 provides a ligand contact to heme b.

It belongs to the peroxidase family. Peroxidase/catalase subfamily. As to quaternary structure, homodimer or homotetramer. It depends on heme b as a cofactor. Post-translationally, formation of the three residue Trp-Tyr-Met cross-link is important for the catalase, but not the peroxidase activity of the enzyme.

It catalyses the reaction H2O2 + AH2 = A + 2 H2O. It carries out the reaction 2 H2O2 = O2 + 2 H2O. Functionally, bifunctional enzyme with both catalase and broad-spectrum peroxidase activity. This is Catalase-peroxidase from Edwardsiella tarda.